The chain runs to 150 residues: Interferon antagonist OPG027 (150 aa).

This sequence belongs to the orthopoxvirus OPG027 family.

Its function is as follows. Inhibits antiviral activity induced by type I interferons. Does not block signal transduction of IFN, but is important to counteract the host antiviral state induced by a pre-treatment with IFN. This is Interferon antagonist OPG027 (OPG027) from Homo sapiens (Human).